Consider the following 209-residue polypeptide: Large ribosomal subunit protein uL3 (209 aa).

The tract at residues 117–142 (FQGPIKRHGQSRGPETHGSRYHRRPG) is disordered.

Belongs to the universal ribosomal protein uL3 family. As to quaternary structure, part of the 50S ribosomal subunit. Forms a cluster with proteins L14 and L19.

Its function is as follows. One of the primary rRNA binding proteins, it binds directly near the 3'-end of the 23S rRNA, where it nucleates assembly of the 50S subunit. In Clostridioides difficile (strain 630) (Peptoclostridium difficile), this protein is Large ribosomal subunit protein uL3.